The sequence spans 87 residues: Toxin CngtIII (87 aa).

The N-terminal stretch at 1–19 (MNSLLMITACLVLFGTVWA) is a signal peptide. The LCN-type CS-alpha/beta domain occupies 20–85 (KEGYLVNKST…TYPLPNKTCS (66 aa)). Disulfide bonds link Cys31–Cys84, Cys35–Cys60, Cys44–Cys65, and Cys48–Cys67.

It belongs to the long (4 C-C) scorpion toxin superfamily. Sodium channel inhibitor family. Beta subfamily. In terms of tissue distribution, expressed by the venom gland.

It is found in the secreted. Beta toxins bind voltage-independently at site-4 of sodium channels (Nav) and shift the voltage of activation toward more negative potentials thereby affecting sodium channel activation and promoting spontaneous and repetitive firing. In Centruroides noxius (Mexican scorpion), this protein is Toxin CngtIII.